The sequence spans 351 residues: Transmembrane and coiled-coil domain-containing protein 5B (351 aa).

Residues 17 to 214 (EIPKLEITKQ…WRSSIQSAKT (198 aa)) are a coiled coil. Residues 292-312 (IFVVMIFFRLLGYVLFYLQYI) form a helical membrane-spanning segment.

It belongs to the TMCO5 family.

Its subcellular location is the membrane. This is Transmembrane and coiled-coil domain-containing protein 5B (TMCO5B) from Bos taurus (Bovine).